The primary structure comprises 451 residues: Phosphoglucosamine mutase (451 aa).

The active-site Phosphoserine intermediate is the Ser102. The Mg(2+) site is built by Ser102, Asp243, Asp245, and Asp247. Residue Ser102 is modified to Phosphoserine.

Belongs to the phosphohexose mutase family. The cofactor is Mg(2+). Activated by phosphorylation.

It catalyses the reaction alpha-D-glucosamine 1-phosphate = D-glucosamine 6-phosphate. In terms of biological role, catalyzes the conversion of glucosamine-6-phosphate to glucosamine-1-phosphate. In Brucella canis (strain ATCC 23365 / NCTC 10854 / RM-666), this protein is Phosphoglucosamine mutase.